Consider the following 425-residue polypeptide: Probable isoprenylcysteine alpha-carbonyl methylesterase ICMEL1 (425 aa).

Positions 1 to 10 are enriched in basic and acidic residues; sequence MQVELADRAA. The segment at 1–42 is disordered; the sequence is MQVELADRAAARPSETGEAPPSSPAAAAAASAAAEDAPLLPG. Over residues 24–34 the composition is skewed to low complexity; the sequence is PAAAAAASAAA. The next 2 helical transmembrane spans lie at 99 to 119 and 154 to 174; these read FLAL…VVYY and VVAF…GALL. Residues 160 to 162 and 231 to 233 contribute to the substrate site; these read GGA and QSA. Residues S232, D334, and H366 contribute to the active site.

This sequence belongs to the AB hydrolase superfamily. Isoprenylcysteine methylesterase family.

Its subcellular location is the endoplasmic reticulum membrane. It is found in the golgi apparatus membrane. The enzyme catalyses [protein]-C-terminal S-[(2E,6E)-farnesyl]-L-cysteine methyl ester + H2O = [protein]-C-terminal S-[(2E,6E)-farnesyl]-L-cysteine + methanol + H(+). Its function is as follows. Catalyzes the demethylation of isoprenylcysteine methylesters. The polypeptide is Probable isoprenylcysteine alpha-carbonyl methylesterase ICMEL1 (IMCEL1) (Oryza sativa subsp. japonica (Rice)).